Consider the following 194-residue polypeptide: Homing endonuclease I-DmoI (194 aa).

The DOD-type homing endonuclease domain maps to 14 to 147; sequence LLGLIIGDGG…VSRWLNNLGV (134 aa). Residues aspartate 21 and glutamate 117 contribute to the active site.

A divalent metal cation is required as a cofactor.

Its function is as follows. Endonuclease involved in intron homing. Recognizes DNA in the 23S rRNA gene intron (minimally 5'-CCGGGTAAGTTCCGG-3'), cutting after A-8 on the top and C-11 on the bottom strand. Has a slow turnover rate, cuts the coding strand with a slight preference over the non-coding strand. This chain is Homing endonuclease I-DmoI, found in Desulfurococcus mucosus (Desulfurococcus mobilis).